Consider the following 284-residue polypeptide: MLQNEVENFTNLLEQATVYLAPYQEKIIVVKYGGNAMINEDLKKLVMQDILLLNQLGVKVVLVHGGGPEISQGVKLLGKEPQFINGLRVTDQDTINVVLQMLAGKVNKSLVALLKGKGVGLCGIDANMLQCEKLQAEVDYGFVGEIVKVNTQLLELALSANLIPVISTVGVDDQGVAYNINADTVASEIAMALGAAKLVSMTDIAGLLRDRFDESTLIPEVEVSEVQGLIDQGIIAGGMIPKIACCTDFINAGGIEANIIDGRVPHAILVSLFGGKNGTLFYKK.

Residues 66–67 (GG), R88, and N179 each bind substrate.

Belongs to the acetylglutamate kinase family. ArgB subfamily.

Its subcellular location is the cytoplasm. The catalysed reaction is N-acetyl-L-glutamate + ATP = N-acetyl-L-glutamyl 5-phosphate + ADP. It participates in amino-acid biosynthesis; L-arginine biosynthesis; N(2)-acetyl-L-ornithine from L-glutamate: step 2/4. Functionally, catalyzes the ATP-dependent phosphorylation of N-acetyl-L-glutamate. The polypeptide is Acetylglutamate kinase (Actinobacillus pleuropneumoniae serotype 3 (strain JL03)).